The following is a 382-amino-acid chain: Chaperone protein DnaJ (382 aa).

The J domain occupies 5–70 (DYYELLGVQK…EKRAAYDRYG (66 aa)). A CR-type zinc finger spans residues 146 to 224 (GAEKEISFRK…CHGEGRVRRT (79 aa)). Zn(2+)-binding residues include Cys159, Cys162, Cys176, Cys179, Cys198, Cys201, Cys212, and Cys215. 4 CXXCXGXG motif repeats span residues 159-166 (CERCDGSG), 176-183 (CPTCRGAG), 198-205 (CPTCGGMG), and 212-219 (CTVCHGEG). Residues 230–250 (RIPPGVDNGSRLRSSGNGEAG) form a disordered region.

This sequence belongs to the DnaJ family. In terms of assembly, homodimer. The cofactor is Zn(2+).

The protein resides in the cytoplasm. Functionally, participates actively in the response to hyperosmotic and heat shock by preventing the aggregation of stress-denatured proteins and by disaggregating proteins, also in an autonomous, DnaK-independent fashion. Unfolded proteins bind initially to DnaJ; upon interaction with the DnaJ-bound protein, DnaK hydrolyzes its bound ATP, resulting in the formation of a stable complex. GrpE releases ADP from DnaK; ATP binding to DnaK triggers the release of the substrate protein, thus completing the reaction cycle. Several rounds of ATP-dependent interactions between DnaJ, DnaK and GrpE are required for fully efficient folding. Also involved, together with DnaK and GrpE, in the DNA replication of plasmids through activation of initiation proteins. The protein is Chaperone protein DnaJ of Opitutus terrae (strain DSM 11246 / JCM 15787 / PB90-1).